A 224-amino-acid polypeptide reads, in one-letter code: Menaquinol:cytochrome c reductase cytochrome b subunit (224 aa).

Residues 37–57 traverse the membrane as a helical segment; the sequence is FSAFVYCFGGLTFFVTVIQVL. Tyr42 is a heme b binding site. Cys43 is a binding site for heme c. Heme b contacts are provided by Arg91, His94, His108, and Arg111. A run of 3 helical transmembrane segments spans residues 96-116, 126-146, and 195-215; these read WGASLVIVMMFLHTLRVFFQG, WIVGVLIFFVMLGLGFTGYLL, and IHVFFLPAALFGLMAAHFIMI. 2 residues coordinate heme b: His196 and His211. Residues Arg216 and Ile220 each coordinate heme c. Ser221 contacts heme b.

It belongs to the cytochrome b family. The main subunits of the menaquinol:cytochrome c complex are a Rieske-type iron-sulfur protein (QcrA), a cytochrome b (QcrB) and a cytochrome c (QcrC). The cofactor is heme b. Heme c is required as a cofactor.

The protein resides in the cell membrane. Its function is as follows. Component of the menaquinol:cytochrome c reductase complex. This chain is Menaquinol:cytochrome c reductase cytochrome b subunit, found in Bacillus subtilis (strain 168).